The chain runs to 208 residues: NAD(P)H-quinone oxidoreductase subunit M, chloroplastic (208 aa).

The transit peptide at 1–21 (MAATSSYTACTKFSMLGWIGG) directs the protein to the chloroplast. Positions 37 to 49 (QQAEVEESQQVNA) are enriched in low complexity. Residues 37–70 (QQAEVEESQQVNAQEEEQEKMKQQGKQKLPRPVE) form a disordered region.

Belongs to the NDH complex subunit M family. As to quaternary structure, part of the chloroplast NDH complex, composed of a mixture of chloroplast and nucleus encoded subunits. Component of the NDH subcomplex A, at least composed of ndhH, ndhI, ndhJ, ndhK, ndhL, ndhM, ndhN and ndhO.

It is found in the plastid. Its subcellular location is the chloroplast thylakoid membrane. It carries out the reaction a plastoquinone + NADH + (n+1) H(+)(in) = a plastoquinol + NAD(+) + n H(+)(out). The enzyme catalyses a plastoquinone + NADPH + (n+1) H(+)(in) = a plastoquinol + NADP(+) + n H(+)(out). Functionally, NDH shuttles electrons from NAD(P)H:plastoquinone, via FMN and iron-sulfur (Fe-S) centers, to quinones in the photosynthetic chain and possibly in a chloroplast respiratory chain. The immediate electron acceptor for the enzyme in this species is believed to be plastoquinone. Couples the redox reaction to proton translocation, and thus conserves the redox energy in a proton gradient. In Vitis vinifera (Grape), this protein is NAD(P)H-quinone oxidoreductase subunit M, chloroplastic.